The following is a 165-amino-acid chain: Anaerobic nitrite reductase GLB1 (165 aa).

Residues 12–162 (VFGEEQEALV…LVAAIKREMK (151 aa)) form the Globin domain. The short motif at 45–49 (EIAPS) is the Homodimerization element. Heme b contacts are provided by Ser55, Lys69, His73, Arg103, Thr107, and His108. Residues 115–127 (DGHFEVTGFALLE) carry the Homodimerization motif.

Belongs to the plant globin family. In terms of assembly, homodimer. Heme b is required as a cofactor. As to expression, in vegetative but not in embryonic organs.

It is found in the cytoplasm. It localises to the nucleus. It carries out the reaction Fe(III)-heme b-[protein] + nitric oxide + H2O = Fe(II)-heme b-[protein] + nitrite + 2 H(+). Phytoglobin that reduces nitrite to nitric oxide (NO) under anoxic conditions (e.g. during flooding or in waterlogged soil). May not function as an oxygen storage or transport protein. Has an unusually high affinity for O(2) through an hexacoordinate heme iron because of a very low dissociation constant. The chain is Anaerobic nitrite reductase GLB1 (HB) from Zea mays subsp. parviglumis (Balsas teosinte).